Reading from the N-terminus, the 226-residue chain is Apoptosis regulator OPG045 (226 aa).

Belongs to the orthopoxvirus OPG045 family. As to quaternary structure, homodimer. Interacts with host pro-apoptotic protein BCL2L11 (via BH3 domain). Interacts with host NLRP1. Interacts with host BAK.

It localises to the host mitochondrion outer membrane. The protein resides in the host cytoplasm. Functionally, plays a role in evading host innate immune response by inhibiting host inflammasome activation. Interacts with and inhibits NLR-mediated interleukin-1 beta/IL1B production in infected cells. At the host mitochondria outer membrane, interacts with the BH3 domain of host BAK and prevents BAK from binding active BAX. In turn, host apoptosis is inhibited. This Homo sapiens (Human) protein is Apoptosis regulator OPG045 (OPG045).